The sequence spans 211 residues: Adenylyl-sulfate kinase (211 aa).

Position 36 to 43 (Gly-36 to Ser-43) interacts with ATP. Catalysis depends on Ser-110, which acts as the Phosphoserine intermediate.

It belongs to the APS kinase family.

The catalysed reaction is adenosine 5'-phosphosulfate + ATP = 3'-phosphoadenylyl sulfate + ADP + H(+). It functions in the pathway sulfur metabolism; hydrogen sulfide biosynthesis; sulfite from sulfate: step 2/3. Functionally, catalyzes the synthesis of activated sulfate. The chain is Adenylyl-sulfate kinase (cysC) from Buchnera aphidicola subsp. Schizaphis graminum (strain Sg).